A 362-amino-acid chain; its full sequence is MDKFWWHAAWGLCLLPLSLAHEQIDLNITCRYAGVFHVEKNGRYSISRTEAADLCQAFNSTLPTMDQMVMALSKGFETCRYGFIEGHVVIPRIQPNAICAANHTGVYILTSNTSHYDTYCFNASAPLEEDCTSVTDLPNSFEGPVTITIVNRDGTRYSKKGEYRTHQEDIDASNTTDDDVSSGSSSEKSTSGGYVFHTYLPTIHSTADQDDPYFIGSTMATRDQDSSMDPRGNSLTVTDGSKLTEHSSGNQDSGLNSTSRPGGKPRVPEWLIVLASLLALALILAVCIAVNSRRRCGQKKKLVINSGNGKVEDRKPSELNGEASKSQEMVHLVNKEPSETPDQFMTADETRNLQNVDMKIGV.

A signal peptide spans 1 to 22 (MDKFWWHAAWGLCLLPLSLAHE). Residues 23–269 (QIDLNITCRY…RPGGKPRVPE (247 aa)) are Extracellular-facing. N-linked (GlcNAc...) asparagine glycosylation occurs at Asn-27. 3 disulfide bridges follow: Cys-30–Cys-131, Cys-55–Cys-120, and Cys-79–Cys-99. A Link domain is found at 34 to 122 (GVFHVEKNGR…TSHYDTYCFN (89 aa)). Arg-43 provides a ligand contact to hyaluronan. N-linked (GlcNAc...) asparagine glycosylation is present at Asn-59. Arg-80 and Tyr-81 together coordinate hyaluronan. Residue Asn-102 is glycosylated (N-linked (GlcNAc...) asparagine). Residue Tyr-107 participates in hyaluronan binding. N-linked (GlcNAc...) asparagine glycans are attached at residues Asn-112 and Asn-122. Residues 158–169 (SKKGEYRTHQED) show a composition bias toward basic and acidic residues. Disordered regions lie at residues 158 to 190 (SKKG…EKST) and 211 to 263 (DPYF…RPGG). Asn-174 carries an N-linked (GlcNAc...) asparagine glycan. Residues 181–190 (SSGSSSEKST) show a composition bias toward low complexity. A glycan (O-linked (Xyl...) (chondroitin sulfate) serine) is linked at Ser-182. Residues 226-269 (SSMDPRGNSLTVTDGSKLTEHSSGNQDSGLNSTSRPGGKPRVPE) are stem. Positions 233–260 (NSLTVTDGSKLTEHSSGNQDSGLNSTSR) are enriched in polar residues. A glycan (N-linked (GlcNAc...) asparagine) is linked at Asn-256. The helical transmembrane segment at 270–290 (WLIVLASLLALALILAVCIAV) threads the bilayer. Residues 291–362 (NSRRRCGQKK…LQNVDMKIGV (72 aa)) are Cytoplasmic-facing. Ser-292 carries the post-translational modification Phosphoserine; by PKC. The interval 293-311 (RRRCGQKKKLVINSGNGKV) is required for interaction with EZR, MSN and RDX and for co-localization to microvilli. A phosphoserine mark is found at Ser-306, Ser-317, and Ser-326. The disordered stretch occupies residues 307–327 (GNGKVEDRKPSELNGEASKSQ).

Interacts with PKN2. Interacts with TIAM1 and TIAM2. Interacts with HA, as well as other glycosaminoglycans, collagen, laminin, and fibronectin via its N-terminal segment. Interacts with UNC119. Interacts with PDPN (via extracellular domain); this interaction is required for PDPN-mediated directional migration and regulation of lamellipodia extension/stabilization during cell spreading and migration. Interacts with RDX, EZR and MSN. Interacts with EGFR. Interacts with CD74; this complex is essential for the MIF-induced signaling cascade that results in B cell survival. Post-translationally, phosphorylated; activation of PKC results in the dephosphorylation of Ser-326 (constitutive phosphorylation site), and the phosphorylation of Ser-292. In terms of processing, N-glycosylated. O-glycosylated; contains chondroitin sulfate glycans which can be more or less sulfated.

It is found in the cell membrane. It localises to the cell projection. The protein localises to the microvillus. The protein resides in the secreted. Cell-surface receptor that plays a role in cell-cell interactions, as well as cell adhesion and migration, helping them to sense and respond to changes in the tissue microenvironment. Participates thereby in a wide variety of cellular functions including the activation, recirculation and homing of T-lymphocytes, hematopoiesis, inflammation and response to bacterial infection. Engages, through its ectodomain, extracellular matrix components such as hyaluronan/HA, collagen, growth factors, cytokines or proteases and serves as a platform for signal transduction by assembling, via its cytoplasmic domain, protein complexes containing receptor kinases and membrane proteases. Such effectors include PKN2, the RhoGTPases RAC1 and RHOA, Rho-kinases and phospholipase C that coordinate signaling pathways promoting calcium mobilization and actin-mediated cytoskeleton reorganization essential for cell migration and adhesion. This chain is CD44 antigen (CD44), found in Cricetulus griseus (Chinese hamster).